We begin with the raw amino-acid sequence, 786 residues long: Endonuclease MutS2 (786 aa).

Position 335 to 342 (335 to 342 (GPNTGGKT)) interacts with ATP. Residues 711 to 786 (LDLRGERFEN…GLGVTVVELK (76 aa)) form the Smr domain.

Belongs to the DNA mismatch repair MutS family. MutS2 subfamily. In terms of assembly, homodimer. Binds to stalled ribosomes, contacting rRNA.

Functionally, endonuclease that is involved in the suppression of homologous recombination and thus may have a key role in the control of bacterial genetic diversity. In terms of biological role, acts as a ribosome collision sensor, splitting the ribosome into its 2 subunits. Detects stalled/collided 70S ribosomes which it binds and splits by an ATP-hydrolysis driven conformational change. Acts upstream of the ribosome quality control system (RQC), a ribosome-associated complex that mediates the extraction of incompletely synthesized nascent chains from stalled ribosomes and their subsequent degradation. Probably generates substrates for RQC. In Bacillus anthracis (strain A0248), this protein is Endonuclease MutS2.